Reading from the N-terminus, the 512-residue chain is ATP synthase subunit alpha (512 aa).

169 to 176 (GDRQTGKT) contributes to the ATP binding site.

Belongs to the ATPase alpha/beta chains family. F-type ATPases have 2 components, CF(1) - the catalytic core - and CF(0) - the membrane proton channel. CF(1) has five subunits: alpha(3), beta(3), gamma(1), delta(1), epsilon(1). CF(0) has three main subunits: a(1), b(2) and c(9-12). The alpha and beta chains form an alternating ring which encloses part of the gamma chain. CF(1) is attached to CF(0) by a central stalk formed by the gamma and epsilon chains, while a peripheral stalk is formed by the delta and b chains.

Its subcellular location is the cell inner membrane. The catalysed reaction is ATP + H2O + 4 H(+)(in) = ADP + phosphate + 5 H(+)(out). In terms of biological role, produces ATP from ADP in the presence of a proton gradient across the membrane. The alpha chain is a regulatory subunit. In Orientia tsutsugamushi (strain Ikeda) (Rickettsia tsutsugamushi), this protein is ATP synthase subunit alpha.